We begin with the raw amino-acid sequence, 51 residues long: Large ribosomal subunit protein eL39 (51 aa).

It belongs to the eukaryotic ribosomal protein eL39 family.

The protein is Large ribosomal subunit protein eL39 of Methanobrevibacter smithii (strain ATCC 35061 / DSM 861 / OCM 144 / PS).